A 263-amino-acid polypeptide reads, in one-letter code: Urease accessory protein UreD 1 (263 aa).

It belongs to the UreD family. UreD, UreF and UreG form a complex that acts as a GTP-hydrolysis-dependent molecular chaperone, activating the urease apoprotein by helping to assemble the nickel containing metallocenter of UreC. The UreE protein probably delivers the nickel.

It is found in the cytoplasm. Functionally, required for maturation of urease via the functional incorporation of the urease nickel metallocenter. This chain is Urease accessory protein UreD 1, found in Synechococcus sp. (strain JA-3-3Ab) (Cyanobacteria bacterium Yellowstone A-Prime).